A 485-amino-acid polypeptide reads, in one-letter code: Glutamyl-tRNA(Gln) amidotransferase subunit A (485 aa).

Catalysis depends on charge relay system residues Lys-80 and Ser-155. Catalysis depends on Ser-179, which acts as the Acyl-ester intermediate.

This sequence belongs to the amidase family. GatA subfamily. Heterotrimer of A, B and C subunits.

It carries out the reaction L-glutamyl-tRNA(Gln) + L-glutamine + ATP + H2O = L-glutaminyl-tRNA(Gln) + L-glutamate + ADP + phosphate + H(+). Allows the formation of correctly charged Gln-tRNA(Gln) through the transamidation of misacylated Glu-tRNA(Gln) in organisms which lack glutaminyl-tRNA synthetase. The reaction takes place in the presence of glutamine and ATP through an activated gamma-phospho-Glu-tRNA(Gln). The chain is Glutamyl-tRNA(Gln) amidotransferase subunit A from Leptospira borgpetersenii serovar Hardjo-bovis (strain L550).